The following is a 177-amino-acid chain: MSDTEDNKNKQTTRRDFIVLTASSVAAVGAACAFWPIIDSFNPSADVLALSSIEVDLSNIAIGQTVTVKWQGKPIFITNRTHDEIAAARAVKMSELIDPERDEVRVKAGHDNWLVTIGICTHLGCVPLSHKGEYNGWFCPCHGSQYDSSGRVRKGPAPLNLAVPPYIFISDKKIRIG.

Residues 18–38 form a helical membrane-spanning segment; sequence IVLTASSVAAVGAACAFWPII. The 88-residue stretch at 88 to 175 folds into the Rieske domain; that stretch reads ARAVKMSELI…YIFISDKKIR (88 aa). [2Fe-2S] cluster contacts are provided by Cys-120, His-122, Cys-139, and His-142. Cys-125 and Cys-141 are disulfide-bonded.

Belongs to the Rieske iron-sulfur protein family. As to quaternary structure, the main subunits of complex b-c1 are: cytochrome b, cytochrome c1 and the Rieske protein. [2Fe-2S] cluster is required as a cofactor.

Its subcellular location is the cell membrane. It carries out the reaction a quinol + 2 Fe(III)-[cytochrome c](out) = a quinone + 2 Fe(II)-[cytochrome c](out) + 2 H(+)(out). Component of the ubiquinol-cytochrome c reductase complex (complex III or cytochrome b-c1 complex), which is a respiratory chain that generates an electrochemical potential coupled to ATP synthesis. This is Ubiquinol-cytochrome c reductase iron-sulfur subunit (petA) from Rickettsia prowazekii (strain Madrid E).